Consider the following 447-residue polypeptide: Na(+)-translocating NADH-quinone reductase subunit A (447 aa).

The protein belongs to the NqrA family. Composed of six subunits; NqrA, NqrB, NqrC, NqrD, NqrE and NqrF.

The enzyme catalyses a ubiquinone + n Na(+)(in) + NADH + H(+) = a ubiquinol + n Na(+)(out) + NAD(+). Its function is as follows. NQR complex catalyzes the reduction of ubiquinone-1 to ubiquinol by two successive reactions, coupled with the transport of Na(+) ions from the cytoplasm to the periplasm. NqrA to NqrE are probably involved in the second step, the conversion of ubisemiquinone to ubiquinol. The protein is Na(+)-translocating NADH-quinone reductase subunit A of Neisseria meningitidis serogroup A / serotype 4A (strain DSM 15465 / Z2491).